The sequence spans 221 residues: MDGYYSLSPISVLHRIKDSFHFAVSALLANLFSALFTFFFALVGTLLGALTGALIGQETESGFIRGAAVGAISGAVFSIEVFESSLLLWQSDESGIGCLLYLIDVIASLLSGRLVRERIGPAMLSAVQSQMGAVESQFQDHTDIFDTAISKGLTGDSLNRIPKVRITDTSPEIVSCSVCLQDFQVGETVRSLPHCHHMFHLPCIDKWLRRHASCPLCRRHL.

3 helical membrane passes run 35–55 (LFTF…GALI), 69–89 (VGAI…LLLW), and 95–115 (GIGC…GRLV). An RING-type; atypical zinc finger spans residues 176-218 (CSVCLQDFQVGETVRSLPHCHHMFHLPCIDKWLRRHASCPLCR).

It belongs to the RING-type zinc finger family. NIP subfamily.

It is found in the membrane. May be involved in the early steps of the plant defense signaling pathway. This chain is NEP1-interacting protein-like 1 (ATL27), found in Arabidopsis thaliana (Mouse-ear cress).